The sequence spans 476 residues: Glucose-1-phosphate adenylyltransferase (476 aa).

Residues tyrosine 114, glycine 179, 194-195, and serine 212 each bind alpha-D-glucose 1-phosphate; that span reads EK.

This sequence belongs to the bacterial/plant glucose-1-phosphate adenylyltransferase family. In terms of assembly, homotetramer.

It carries out the reaction alpha-D-glucose 1-phosphate + ATP + H(+) = ADP-alpha-D-glucose + diphosphate. The protein operates within glycan biosynthesis; glycogen biosynthesis. Involved in the biosynthesis of ADP-glucose, a building block required for the elongation reactions to produce glycogen. Catalyzes the reaction between ATP and alpha-D-glucose 1-phosphate (G1P) to produce pyrophosphate and ADP-Glc. This Yersinia pestis protein is Glucose-1-phosphate adenylyltransferase.